A 280-amino-acid polypeptide reads, in one-letter code: UPF0494 membrane protein SPAC212.01c (280 aa).

A run of 4 helical transmembrane segments spans residues 107-127 (WPLLIIWSIIIVFAVDKKFEV), 144-164 (IWVPIAIYVCLLVLMLLSLIF), 178-198 (VIIAVLGAVLGMIIAVLGMII), and 199-219 (AALGMIIAALGATITGLLYFG).

Belongs to the UPF0494 family.

It localises to the membrane. This Schizosaccharomyces pombe (strain 972 / ATCC 24843) (Fission yeast) protein is UPF0494 membrane protein SPAC212.01c.